The sequence spans 202 residues: Protein-methionine-sulfoxide reductase heme-binding subunit MsrQ (202 aa).

Transmembrane regions (helical) follow at residues 8 to 28 (LAVFLGALAVPAWWLYQAWIF), 42 to 62 (LGLGALVLLLLTLAMTPLQKL), 75 to 95 (LGLWCFTYVLLHLSAYCVFIL), 110 to 130 (PYIIVGMLGFICLFLLAITSN), 147 to 167 (LVYLILGLGLLHMLWVVRADL), and 169 to 189 (EWTLYAVVGASLMLLRLPSIA).

This sequence belongs to the MsrQ family. As to quaternary structure, heterodimer of a catalytic subunit (MsrP) and a heme-binding subunit (MsrQ). FMN is required as a cofactor. The cofactor is heme b.

The protein resides in the cell inner membrane. In terms of biological role, part of the MsrPQ system that repairs oxidized periplasmic proteins containing methionine sulfoxide residues (Met-O), using respiratory chain electrons. Thus protects these proteins from oxidative-stress damage caused by reactive species of oxygen and chlorine generated by the host defense mechanisms. MsrPQ is essential for the maintenance of envelope integrity under bleach stress, rescuing a wide series of structurally unrelated periplasmic proteins from methionine oxidation. MsrQ provides electrons for reduction to the reductase catalytic subunit MsrP, using the quinone pool of the respiratory chain. The chain is Protein-methionine-sulfoxide reductase heme-binding subunit MsrQ from Pseudomonas aeruginosa (strain LESB58).